Consider the following 36-residue polypeptide: Zinc metalloproteinase-disintegrin-like VaH1 (36 aa).

The 36-residue stretch at 1–36 (MVTKYSSIFMSPILSNPPILYFSDCSREXYQKXLTN) folds into the Peptidase M12B domain.

Belongs to the venom metalloproteinase (M12B) family. P-III subfamily. P-IIIa sub-subfamily. Monomer. Requires Zn(2+) as cofactor. Post-translationally, the N-terminus is blocked. In terms of processing, glycosylated. Expressed by the venom gland.

The protein resides in the secreted. Its activity is regulated as follows. Inhibited by EDTA, but not inhibited by iodoacetamide, PMSF and pepstatin A. Functionally, snake venom zinc metalloprotease that exhibits strong hemorrhagic activity. It also degrades alpha-chain of fibrinogen (FGA), but not the beta- and the gamma-chains. Possesses potent azocaseinolytic activity and cleaves insulin B-chain, hydrolyzing it at positions Ala(14)-Leu(15), followed by Tyr(16)-Leu(17) and His(10)-Leu(11). In vivo, subcutaneous injection into mice induces strong hemorrhage. This chain is Zinc metalloproteinase-disintegrin-like VaH1, found in Vipera ammodytes ammodytes (Western sand viper).